A 257-amino-acid chain; its full sequence is Leucine-rich repeat-containing protein 3 (257 aa).

The first 32 residues, 1-32 (MGTVRPPRPSLLLVSTRESCLFLLFCLHLGAA), serve as a signal peptide directing secretion. The LRRNT domain maps to 33–64 (CPQPCRCPDHAGAVAVFCSLRGLQEVPEDIPA). 4 LRR repeats span residues 65–86 (NTVL…AFQH), 89–110 (RLRE…TFAG), 114–135 (GLRL…ALGK), and 136–157 (LSAK…QEAL). The helical transmembrane segment at 205–225 (VAMLVTMFGWFAMVIAYVVYY) threads the bilayer.

This sequence belongs to the LRRC3 family. Widely expressed; detected in testis, lung, small intestine, breast, brain, heart, bone marrow, placenta, colon, fetal brain, liver, fetal liver, thymus, salivary gland, spinal cord, spleen, trachea and adrenal gland.

The protein resides in the membrane. This chain is Leucine-rich repeat-containing protein 3 (LRRC3), found in Homo sapiens (Human).